We begin with the raw amino-acid sequence, 196 residues long: MTTILRIDSSIKGEAAVSRRLTQRILDRLLEAHPDATVVSRDLAQGIRQIDGSWLGSVFTAPEQRTADQQEIARTADAVMAEVKEADILVIALPVYNFGAPAQLKSWVDHIARRGESFVYTETGPVGLLTGKRAIVAFTSDGTPLGSELDHASGWLRQVLGFVGITDVDFVAADRMVFGADEAMARAEAAVAALAA.

Ser10 contacts FMN.

It belongs to the azoreductase type 1 family. In terms of assembly, homodimer. The cofactor is FMN.

The catalysed reaction is 2 a quinone + NADH + H(+) = 2 a 1,4-benzosemiquinone + NAD(+). It catalyses the reaction N,N-dimethyl-1,4-phenylenediamine + anthranilate + 2 NAD(+) = 2-(4-dimethylaminophenyl)diazenylbenzoate + 2 NADH + 2 H(+). In terms of biological role, quinone reductase that provides resistance to thiol-specific stress caused by electrophilic quinones. Its function is as follows. Also exhibits azoreductase activity. Catalyzes the reductive cleavage of the azo bond in aromatic azo compounds to the corresponding amines. The chain is FMN-dependent NADH:quinone oxidoreductase from Cereibacter sphaeroides (strain KD131 / KCTC 12085) (Rhodobacter sphaeroides).